Reading from the N-terminus, the 238-residue chain is Ankyrin repeat domain-containing protein 49 (238 aa).

A Phosphoserine modification is found at Ser-48. ANK repeat units lie at residues 77–105, 106–135, 139–168, and 172–205; these read LLWA…TRDE, DKYT…DVHA, DGWT…DVNA, and GLLT…GLKN.

Its subcellular location is the nucleus. Functionally, may have a role in spermatogenesis where it promotes autophagy in response to serum starvation, via the NF-kappaB pathway. The chain is Ankyrin repeat domain-containing protein 49 (ANKRD49) from Bos taurus (Bovine).